The sequence spans 542 residues: Probable folate-biopterin transporter 8, chloroplastic (542 aa).

The N-terminal 78 residues, 1–78, are a transit peptide targeting the chloroplast; sequence MERIMINPLL…GVSEFEETAR (78 aa). The segment at 24 to 45 is disordered; it reads LSSIHRQQQQQERQSNNNTLFM. The next 12 helical transmembrane spans lie at 103–123, 132–152, 155–175, 181–201, 223–243, 246–266, 308–328, 338–358, 369–389, 404–424, 446–466, and 477–497; these read FPWLALNFHMVHSLALQPSTL, LPMVAKPLYGVLSDVLYIGSG, VPYIAIGVFLQVLAWGSMGIF, VLPSLVACVLLSNLGASITEV, ALMASAAGGVLGNLLGGYLLL, PPKISFLVFSALLSLQLVVSL, LIWAVVSIAMVPLLSGSVFCY, SVIGMSKVIGQLMLLCLTVVY, PLIHIIQLLYGLSILLDYILV, VLCFSSLAEILAQFKILPFAV, LCLSQIVSAFLGVGLANLIGI, and GILIQSLAALAPLCFMHLVPM. Positions 506–542 are disordered; it reads GKRGISKRSRRNRRVGRVVDKESVTYRRERESEEAQR. The span at 509 to 521 shows a compositional bias: basic residues; the sequence is GISKRSRRNRRVG. Basic and acidic residues predominate over residues 522 to 542; sequence RVVDKESVTYRRERESEEAQR.

Belongs to the major facilitator superfamily. Folate-biopterin transporter (TC 2.A.71) family.

Its subcellular location is the plastid. The protein resides in the chloroplast membrane. Functionally, could mediate folate transport. This chain is Probable folate-biopterin transporter 8, chloroplastic, found in Arabidopsis thaliana (Mouse-ear cress).